Here is a 314-residue protein sequence, read N- to C-terminus: MATRGRHRSRTSGTSSEPMTLRAPPDERDLDSLRSFGVVNLDKPPGPSAHQVAAWIRDATGQDRVAHGGTLDPKVTGCLPVLLGDAARMAQVFDNAVKEYVTVLELHDQAPADIADIVAEFETDIYQKPPRKSAVKRQLRSRRIHSLDILEQGDRRLLLRVRCASGTYIRKLCHDIGLAAGTGAHMGDLRRTATGTFDDGSLSTMHDLVDALAFAADGDEAQLREIIQPAERALSHLPRVTIAPSAAREVAEGAPVYAPGVIETGPAEVGDATPEIDSQVVSVTPDGAAVCLGTLVSDPDADSGLVVELDRMLV.

Over residues 1–10 (MATRGRHRSR) the composition is skewed to basic residues. The interval 1–30 (MATRGRHRSRTSGTSSEPMTLRAPPDERDL) is disordered. Asp72 functions as the Nucleophile in the catalytic mechanism. Residues 237 to 314 (LPRVTIAPSA…LVVELDRMLV (78 aa)) enclose the PUA domain.

The protein belongs to the pseudouridine synthase TruB family. Type 2 subfamily.

It catalyses the reaction uridine(55) in tRNA = pseudouridine(55) in tRNA. Its function is as follows. Could be responsible for synthesis of pseudouridine from uracil-55 in the psi GC loop of transfer RNAs. In Haloarcula marismortui (strain ATCC 43049 / DSM 3752 / JCM 8966 / VKM B-1809) (Halobacterium marismortui), this protein is Probable tRNA pseudouridine synthase B.